A 515-amino-acid chain; its full sequence is Histidine ammonia-lyase (515 aa).

Positions 142-144 (ASG) form a cross-link, 5-imidazolinone (Ala-Gly). 2,3-didehydroalanine (Ser) is present on Ser-143.

Belongs to the PAL/histidase family. Post-translationally, contains an active site 4-methylidene-imidazol-5-one (MIO), which is formed autocatalytically by cyclization and dehydration of residues Ala-Ser-Gly.

The protein resides in the cytoplasm. It catalyses the reaction L-histidine = trans-urocanate + NH4(+). The protein operates within amino-acid degradation; L-histidine degradation into L-glutamate; N-formimidoyl-L-glutamate from L-histidine: step 1/3. The sequence is that of Histidine ammonia-lyase from Bradyrhizobium sp. (strain ORS 278).